The following is a 276-amino-acid chain: CTD small phosphatase-like protein (276 aa).

A disordered region spans residues Met-1–Asn-31. An FCP1 homology domain is found at Leu-102–Leu-260. Asp-112 acts as the 4-aspartylphosphate intermediate in catalysis. Positions 112, 114, and 223 each coordinate Mg(2+). Catalysis depends on Asp-114, which acts as the Proton donor.

Monomer. Interacts with REST. Mg(2+) serves as cofactor.

The protein resides in the nucleus. It catalyses the reaction O-phospho-L-seryl-[protein] + H2O = L-seryl-[protein] + phosphate. The enzyme catalyses O-phospho-L-threonyl-[protein] + H2O = L-threonyl-[protein] + phosphate. Functionally, preferentially catalyzes the dephosphorylation of 'Ser-5' within the tandem 7 residue repeats in the C-terminal domain (CTD) of the largest RNA polymerase II subunit POLR2A. Negatively regulates RNA polymerase II transcription, possibly by controlling the transition from initiation/capping to processive transcript elongation. Recruited by REST to neuronal genes that contain RE-1 elements, leading to neuronal gene silencing in non-neuronal cells. This Mus musculus (Mouse) protein is CTD small phosphatase-like protein (Ctdspl).